The sequence spans 413 residues: [Pyruvate dehydrogenase (acetyl-transferring)] kinase, mitochondrial (413 aa).

In terms of domain architecture, Histidine kinase spans 137 to 369 (MKENEGGQVD…DAIIYLKALS (233 aa)). Residues 253 to 260 (ELFKNSMR), Asp294, 313 to 314 (ST), and 330 to 335 (GYGYGL) each bind ATP.

The protein belongs to the PDK/BCKDK protein kinase family.

It localises to the mitochondrion matrix. The enzyme catalyses L-seryl-[pyruvate dehydrogenase E1 alpha subunit] + ATP = O-phospho-L-seryl-[pyruvate dehydrogenase E1 alpha subunit] + ADP + H(+). Functionally, inhibits the mitochondrial pyruvate dehydrogenase complex by phosphorylation of the E1 alpha subunit, thus contributing to the regulation of glucose metabolism. This chain is [Pyruvate dehydrogenase (acetyl-transferring)] kinase, mitochondrial (Pdk), found in Drosophila melanogaster (Fruit fly).